A 284-amino-acid polypeptide reads, in one-letter code: Probable palmitoyltransferase ZDHHC24 (284 aa).

Residues 1–18 (MGESWAARGAEGAPARMP) lie on the Cytoplasmic side of the membrane. The chain crosses the membrane as a helical span at residues 19–39 (LVLTALWAAVVVLELAYVMVL). The Extracellular segment spans residues 40–52 (GPGPPPLGPLARA). Residues 53 to 73 (LQLALAAYQLLNLLGNVVLFL) form a helical membrane-spanning segment. At 74-137 (RSDPSIRGVM…GCCVGFHNYR (64 aa)) the chain is on the cytoplasmic side. Residues 94 to 144 (AYCYQCQSQVPPRSGHCSACRVCILRRDHHCRLLGCCVGFHNYRPFLCLLL) form the DHHC domain. The S-palmitoyl cysteine intermediate role is filled by Cys124. Residues 138–158 (PFLCLLLHSAGVLLHISVLLG) traverse the membrane as a helical segment. Over 159–166 (PALSALLQ) the chain is Extracellular. A helical membrane pass occupies residues 167-187 (AHSALYTVALLLLPWLMLLTG). Residues 188 to 195 (KVSLAQFA) lie on the Cytoplasmic side of the membrane. Residues 196–216 (LAFVVDTCVAGALLCGAGLLF) traverse the membrane as a helical segment. The Extracellular segment spans residues 217–284 (HGMLLLRGQT…TPGDVGLVTS (68 aa)).

The protein belongs to the DHHC palmitoyltransferase family.

The protein resides in the membrane. The enzyme catalyses L-cysteinyl-[protein] + hexadecanoyl-CoA = S-hexadecanoyl-L-cysteinyl-[protein] + CoA. Probable palmitoyltransferase that could catalyze the addition of palmitate onto various protein substrates. The sequence is that of Probable palmitoyltransferase ZDHHC24 from Mus musculus (Mouse).